A 652-amino-acid polypeptide reads, in one-letter code: DNA ligase (652 aa).

Residues 29 to 33 (DSDYD), 78 to 79 (SL), and glutamate 107 each bind NAD(+). The active-site N6-AMP-lysine intermediate is the lysine 109. NAD(+)-binding residues include arginine 130, glutamate 164, lysine 278, and lysine 302. Positions 395, 398, 413, and 418 each coordinate Zn(2+). Positions 577-652 (NSDAALFGLT…IEDEDWLRQL (76 aa)) constitute a BRCT domain.

This sequence belongs to the NAD-dependent DNA ligase family. LigA subfamily. Mg(2+) serves as cofactor. The cofactor is Mn(2+).

The enzyme catalyses NAD(+) + (deoxyribonucleotide)n-3'-hydroxyl + 5'-phospho-(deoxyribonucleotide)m = (deoxyribonucleotide)n+m + AMP + beta-nicotinamide D-nucleotide.. DNA ligase that catalyzes the formation of phosphodiester linkages between 5'-phosphoryl and 3'-hydroxyl groups in double-stranded DNA using NAD as a coenzyme and as the energy source for the reaction. It is essential for DNA replication and repair of damaged DNA. This is DNA ligase from Streptococcus pyogenes serotype M12 (strain MGAS2096).